Reading from the N-terminus, the 145-residue chain is Small ribosomal subunit protein eS19 (145 aa).

An N6-acetyllysine modification is found at lysine 23. Position 67 is an omega-N-methylarginine (arginine 67). N6-acetyllysine is present on residues lysine 111 and lysine 115. N6-succinyllysine is present on lysine 143.

This sequence belongs to the eukaryotic ribosomal protein eS19 family. As to quaternary structure, component of the small ribosomal subunit. Part of the small subunit (SSU) processome, composed of more than 70 proteins and the RNA chaperone small nucleolar RNA (snoRNA) U3. Interacts with RPS19BP1; the interaction is direct and mediates the integration of RPS19 in state post-A1. Interacts with RPS19BP1.

The protein localises to the cytoplasm. Its subcellular location is the nucleus. The protein resides in the nucleolus. In terms of biological role, component of the small ribosomal subunit. The ribosome is a large ribonucleoprotein complex responsible for the synthesis of proteins in the cell. Required for pre-rRNA processing and maturation of 40S ribosomal subunits. Part of the small subunit (SSU) processome, first precursor of the small eukaryotic ribosomal subunit. During the assembly of the SSU processome in the nucleolus, many ribosome biogenesis factors, an RNA chaperone and ribosomal proteins associate with the nascent pre-rRNA and work in concert to generate RNA folding, modifications, rearrangements and cleavage as well as targeted degradation of pre-ribosomal RNA by the RNA exosome. In Pongo abelii (Sumatran orangutan), this protein is Small ribosomal subunit protein eS19 (RPS19).